We begin with the raw amino-acid sequence, 131 residues long: L-ectoine synthase (131 aa).

It belongs to the ectoine synthase family.

The catalysed reaction is (2S)-4-acetamido-2-aminobutanoate = L-ectoine + H2O. It participates in amine and polyamine biosynthesis; ectoine biosynthesis; L-ectoine from L-aspartate 4-semialdehyde: step 3/3. In terms of biological role, catalyzes the circularization of gamma-N-acetyl-alpha,gamma-diaminobutyric acid (ADABA) to ectoine (1,4,5,6-tetrahydro-2-methyl-4-pyrimidine carboxylic acid), which is an excellent osmoprotectant. The chain is L-ectoine synthase from Bordetella bronchiseptica (strain ATCC BAA-588 / NCTC 13252 / RB50) (Alcaligenes bronchisepticus).